Reading from the N-terminus, the 209-residue chain is Segregation and condensation protein B (209 aa).

This sequence belongs to the ScpB family. Homodimer. Homodimerization may be required to stabilize the binding of ScpA to the Smc head domains. Component of a cohesin-like complex composed of ScpA, ScpB and the Smc homodimer, in which ScpA and ScpB bind to the head domain of Smc. The presence of the three proteins is required for the association of the complex with DNA.

Its subcellular location is the cytoplasm. Participates in chromosomal partition during cell division. May act via the formation of a condensin-like complex containing Smc and ScpA that pull DNA away from mid-cell into both cell halves. This is Segregation and condensation protein B from Geobacillus thermodenitrificans (strain NG80-2).